A 154-amino-acid chain; its full sequence is Crossover junction endodeoxyribonuclease RuvC (154 aa).

Catalysis depends on residues Asp7, Glu67, and Asp139. 3 residues coordinate Mg(2+): Asp7, Glu67, and Asp139.

It belongs to the RuvC family. Homodimer which binds Holliday junction (HJ) DNA. The HJ becomes 2-fold symmetrical on binding to RuvC with unstacked arms; it has a different conformation from HJ DNA in complex with RuvA. In the full resolvosome a probable DNA-RuvA(4)-RuvB(12)-RuvC(2) complex forms which resolves the HJ. Mg(2+) serves as cofactor.

It localises to the cytoplasm. The enzyme catalyses Endonucleolytic cleavage at a junction such as a reciprocal single-stranded crossover between two homologous DNA duplexes (Holliday junction).. Its function is as follows. The RuvA-RuvB-RuvC complex processes Holliday junction (HJ) DNA during genetic recombination and DNA repair. Endonuclease that resolves HJ intermediates. Cleaves cruciform DNA by making single-stranded nicks across the HJ at symmetrical positions within the homologous arms, yielding a 5'-phosphate and a 3'-hydroxyl group; requires a central core of homology in the junction. The consensus cleavage sequence is 5'-(A/T)TT(C/G)-3'. Cleavage occurs on the 3'-side of the TT dinucleotide at the point of strand exchange. HJ branch migration catalyzed by RuvA-RuvB allows RuvC to scan DNA until it finds its consensus sequence, where it cleaves and resolves the cruciform DNA. The polypeptide is Crossover junction endodeoxyribonuclease RuvC (Prochlorococcus marinus (strain MIT 9303)).